Here is a 525-residue protein sequence, read N- to C-terminus: Phosphoenolpyruvate carboxykinase (ATP) (525 aa).

Arg-54, Tyr-190, and Lys-196 together coordinate substrate. ATP is bound by residues Lys-196, His-215, and 231-239; that span reads GLSGTGKTT. Mn(2+) is bound by residues Lys-196 and His-215. Asp-252 contributes to the Mn(2+) binding site. 3 residues coordinate ATP: Glu-280, Arg-316, and Thr-441. Position 316 (Arg-316) interacts with substrate.

Belongs to the phosphoenolpyruvate carboxykinase (ATP) family. The cofactor is Mn(2+).

Its subcellular location is the cytoplasm. It carries out the reaction oxaloacetate + ATP = phosphoenolpyruvate + ADP + CO2. The protein operates within carbohydrate biosynthesis; gluconeogenesis. Involved in the gluconeogenesis. Catalyzes the conversion of oxaloacetate (OAA) to phosphoenolpyruvate (PEP) through direct phosphoryl transfer between the nucleoside triphosphate and OAA. This chain is Phosphoenolpyruvate carboxykinase (ATP), found in Nitratiruptor sp. (strain SB155-2).